The primary structure comprises 362 residues: Cationic peroxidase SPC4 (362 aa).

Positions 1–31 (MSRAPTLAAAAAVAAVVLICSSSTATAADGN) are cleaved as a signal peptide. Disulfide bonds link Cys-50/Cys-131, Cys-83/Cys-88, Cys-138/Cys-333, and Cys-218/Cys-245. The active-site Proton acceptor is His-81. Residues Asp-82, Val-85, Gly-87, Asp-89, and Ser-91 each contribute to the Ca(2+) site. N-linked (GlcNAc...) asparagine glycosylation is present at Asn-109. Thr-111 lines the (indol-3-yl)acetate pocket. A substrate-binding site is contributed by Pro-181. His-211 contacts heme b. A Ca(2+)-binding site is contributed by Thr-212. N-linked (GlcNAc...) asparagine glycosylation occurs at Asn-234. Residues Asp-257, Thr-260, Ala-263, and Asp-265 each coordinate Ca(2+). Asn-332 carries an N-linked (GlcNAc...) asparagine glycan.

Belongs to the peroxidase family. Classical plant (class III) peroxidase subfamily. In terms of assembly, monomer. Requires heme b as cofactor. Ca(2+) serves as cofactor. In terms of processing, the proportions of glycoforms I and II are 35% and 65% respectively. In terms of tissue distribution, present in germinated and ungerminated grain, seedlings, and leaves and stem of the mature plant.

The protein resides in the secreted. The catalysed reaction is 2 a phenolic donor + H2O2 = 2 a phenolic radical donor + 2 H2O. Its function is as follows. Removal of H(2)O(2), oxidation of toxic reductants, biosynthesis and degradation of lignin, suberization, auxin catabolism, response to environmental stresses such as wounding, pathogen attack and oxidative stress. These functions might be dependent on each isozyme/isoform in each plant tissue. Has a high preference for hydroxycinnamates as substrates. Substrate preference is ferulic acid &gt; p-coumaric acid &gt; N-acetyl tyrosine methyl ester &gt; N-acetyl-tyrosine &gt; tyrosine &gt; catechol &gt; Gly-Tyr-Gly. May be involved in the formation of diferulate linkages in the plant cell wall. The sequence is that of Cationic peroxidase SPC4 from Sorghum bicolor (Sorghum).